The sequence spans 92 residues: UPF0237 protein MM_0082 (92 aa).

One can recognise an ACT domain in the interval 7–81; sequence IITVIGSDRV…KSLGVEVKVQ (75 aa).

The protein belongs to the UPF0237 family.

This Methanosarcina mazei (strain ATCC BAA-159 / DSM 3647 / Goe1 / Go1 / JCM 11833 / OCM 88) (Methanosarcina frisia) protein is UPF0237 protein MM_0082.